A 317-amino-acid polypeptide reads, in one-letter code: UV DNA damage endonuclease (317 aa).

This sequence belongs to the uve1/UvsE family.

Its function is as follows. Component in a DNA repair pathway. Removal of UV LIGHT damaged nucleotides. Recognizes pyrimidine dimers and cleave a phosphodiester bond immediately 5' to the lesion. This chain is UV DNA damage endonuclease, found in Bacillus cereus (strain G9842).